The sequence spans 1616 residues: Myosin-IIIa (1616 aa).

The Protein kinase domain occupies tryptophan 21–isoleucine 287. ATP contacts are provided by residues isoleucine 27–valine 35 and lysine 50. The active-site Proton acceptor is aspartate 150. The region spanning lysine 338 to lysine 1053 is the Myosin motor domain. The interval leucine 934 to serine 956 is actin-binding. IQ domains follow at residues alanine 1055 to glutamate 1084, arginine 1082 to threonine 1111, and glutamate 1346 to lysine 1375. The tract at residues glutamate 1401 to serine 1479 is interaction with MORN4. Disordered stretches follow at residues leucine 1545–leucine 1567 and alanine 1581–serine 1616. 2 stretches are compositionally biased toward basic and acidic residues: residues glycine 1550–glutamine 1564 and serine 1583–proline 1592. Residues leucine 1602–serine 1616 show a composition bias toward basic residues.

The protein in the C-terminal section; belongs to the TRAFAC class myosin-kinesin ATPase superfamily. Myosin family. It in the N-terminal section; belongs to the protein kinase superfamily. STE Ser/Thr protein kinase family. In terms of assembly, interacts with MORN4. Interacts (via C-terminus) with ESPN and ESPNL. Strongest expression in retina, retinal pigment epithelial cells, cochlea and pancreas.

It localises to the cytoplasm. Its subcellular location is the cytoskeleton. The protein localises to the cell projection. It is found in the filopodium tip. The protein resides in the stereocilium. It carries out the reaction L-seryl-[protein] + ATP = O-phospho-L-seryl-[protein] + ADP + H(+). The enzyme catalyses L-threonyl-[protein] + ATP = O-phospho-L-threonyl-[protein] + ADP + H(+). It catalyses the reaction ATP + H2O = ADP + phosphate + H(+). Its function is as follows. Actin-dependent motor protein with a protein kinase activity, playing an essential role in hearing. Probably also plays a role in vision. Required for normal cochlear hair bundle development and hearing. Plays an important role in the early steps of cochlear hair bundle morphogenesis. Influences the number and lengths of stereocilia to be produced and limits the growth of microvilli within the forming auditory hair bundles thereby contributing to the architecture of the hair bundle, including its staircase pattern. Involved in the elongation of actin in stereocilia tips by transporting the actin regulatory factor ESPN to the plus ends of actin filaments. This chain is Myosin-IIIa (MYO3A), found in Homo sapiens (Human).